Consider the following 310-residue polypeptide: Olfactory receptor 10N1 (310 aa).

Over 1–23 the chain is Extracellular; that stretch reads MDNYTLLNEFILLGIPQTQGLET. N-linked (GlcNAc...) asparagine glycosylation occurs at asparagine 3. Residues 24-44 traverse the membrane as a helical segment; that stretch reads LLFVVFLFIYFFTLLGNSLIF. Residues 45 to 55 are Cytoplasmic-facing; that stretch reads TAIISSSTLHT. The chain crosses the membrane as a helical span at residues 56–76; that stretch reads PMYFFLGLLSVFDMLFPSVTC. At 77-95 the chain is on the extracellular side; the sequence is PKMLFYLSVRSPAISYKGC. Cysteine 95 and cysteine 187 form a disulfide bridge. The helical transmembrane segment at 96-116 threads the bilayer; that stretch reads AAQLFFYHLLGSTEGCLYSVM. Residues 117-136 lie on the Cytoplasmic side of the membrane; it reads AYDRYVAICHPLRYMLIMKP. Residues 137 to 157 form a helical membrane-spanning segment; it reads GVCVSLVIIAWLVGCLHATIL. Topologically, residues 158 to 202 are extracellular; the sequence is TSLTFQLVYCASNQVDYFFCDLPAVLPLACTDSKLARKVGSINVG. Residues 203–223 traverse the membrane as a helical segment; that stretch reads FLALMLLFSVCVSYVHIGVAI. The Cytoplasmic portion of the chain corresponds to 224–237; sequence LRIRSAEGRQKAFS. Residues 238–258 form a helical membrane-spanning segment; it reads TCSAHLTAILCAYGPVIIIYL. At 259–264 the chain is on the extracellular side; the sequence is QRTPNP. Residues 265-285 traverse the membrane as a helical segment; the sequence is LLGAVVQILNNIVSPMLNSLI. Residues 286–310 are Cytoplasmic-facing; sequence YSLRNKEVKRSLRRVFQNITFHGQK.

The protein belongs to the G-protein coupled receptor 1 family.

It is found in the cell membrane. Functionally, odorant receptor. This is Olfactory receptor 10N1 from Mus musculus (Mouse).